Consider the following 482-residue polypeptide: Carbamoyl phosphate synthase large chain, N-terminal section (482 aa).

Residues 1-398 (MESIKKVMVF…ALQKAIRSLD (398 aa)) form a carboxyphosphate synthetic domain region. Residues Arg-126, Arg-166, Gly-172, Gly-173, Glu-205, Val-207, Glu-212, Gly-238, Ile-239, His-240, Gln-281, and Glu-295 each coordinate ATP. Positions 130-324 (AEAMAEINEP…IARIAAKIAI (195 aa)) constitute an ATP-grasp domain. Gln-281, Glu-295, and Asn-297 together coordinate Mg(2+). Residues Gln-281, Glu-295, and Asn-297 each contribute to the Mn(2+) site.

The protein belongs to the CarB family. As to quaternary structure, composed of two chains; the small (or glutamine) chain promotes the hydrolysis of glutamine to ammonia, which is used by the large (or ammonia) chain to synthesize carbamoyl phosphate. Tetramer of heterodimers (alpha,beta)4. The cofactor is Mg(2+). Mn(2+) is required as a cofactor.

The enzyme catalyses hydrogencarbonate + L-glutamine + 2 ATP + H2O = carbamoyl phosphate + L-glutamate + 2 ADP + phosphate + 2 H(+). The catalysed reaction is hydrogencarbonate + NH4(+) + 2 ATP = carbamoyl phosphate + 2 ADP + phosphate + 2 H(+). Its pathway is amino-acid biosynthesis; L-arginine biosynthesis; carbamoyl phosphate from bicarbonate: step 1/1. The protein operates within pyrimidine metabolism; UMP biosynthesis via de novo pathway; (S)-dihydroorotate from bicarbonate: step 1/3. Functionally, large subunit of the glutamine-dependent carbamoyl phosphate synthetase (CPSase). CPSase catalyzes the formation of carbamoyl phosphate from the ammonia moiety of glutamine, carbonate, and phosphate donated by ATP, constituting the first step of 2 biosynthetic pathways, one leading to arginine and/or urea and the other to pyrimidine nucleotides. The large subunit (synthetase) binds the substrates ammonia (free or transferred from glutamine from the small subunit), hydrogencarbonate and ATP and carries out an ATP-coupled ligase reaction, activating hydrogencarbonate by forming carboxy phosphate which reacts with ammonia to form carbamoyl phosphate. The protein is Carbamoyl phosphate synthase large chain, N-terminal section (carB1) of Methanocaldococcus jannaschii (strain ATCC 43067 / DSM 2661 / JAL-1 / JCM 10045 / NBRC 100440) (Methanococcus jannaschii).